Here is a 160-residue protein sequence, read N- to C-terminus: MTDQQAEARSYLSEEMIAEFKAAFDMFDADGGGDISVKELGTVMRMLGQTPTKEELDAIIEEVDEDGSGTIDFEEFLVMMVRQMKEDAKGKSEEELAECFRIFDRNADGYIDAEELAEIFRASGEHVTDEEIESLMKDGDKNNDGRIDFDEFLKMMEGVQ.

Thr2 carries the post-translational modification N-acetylthreonine. EF-hand domains lie at 15 to 50 (EMIA…LGQT), 51 to 86 (PTKE…QMKE), 91 to 126 (KSEE…SGEH), and 127 to 160 (VTDE…EGVQ). Ca(2+)-binding residues include Asp28, Asp30, Asp34, Glu39, Asp64, Asp66, Ser68, Thr70, Glu75, Asp104, Asn106, Asp108, Tyr110, Glu115, Asp140, Asn142, Asp144, Arg146, and Glu151.

The protein belongs to the troponin C family.

Functionally, troponin is the central regulatory protein of striated muscle contraction. Tn consists of three components: Tn-I which is the inhibitor of actomyosin ATPase, Tn-T which contains the binding site for tropomyosin and Tn-C. The binding of calcium to Tn-C abolishes the inhibitory action of Tn on actin filaments. In Oryctolagus cuniculus (Rabbit), this protein is Troponin C, skeletal muscle (TNNC2).